Consider the following 1295-residue polypeptide: Phosphoribosylformylglycinamidine synthase (1295 aa).

Positions Trp304–Lys326 are disordered. ATP is bound by residues Gly306–Asp317, Thr385–Tyr387, and Ala677. Positions 678, 717, 721, and 884 each coordinate Mg(2+). The segment covering Leu995 to Asp1012 has biased composition (basic and acidic residues). Residues Leu995–Leu1017 form a disordered region. In terms of domain architecture, Glutamine amidotransferase type-1 spans Val1042 to Gly1295. The active-site Nucleophile is the Cys1135. Residues His1260 and Glu1262 contribute to the active site.

This sequence in the N-terminal section; belongs to the FGAMS family. Monomer.

The protein resides in the cytoplasm. The catalysed reaction is N(2)-formyl-N(1)-(5-phospho-beta-D-ribosyl)glycinamide + L-glutamine + ATP + H2O = 2-formamido-N(1)-(5-O-phospho-beta-D-ribosyl)acetamidine + L-glutamate + ADP + phosphate + H(+). The protein operates within purine metabolism; IMP biosynthesis via de novo pathway; 5-amino-1-(5-phospho-D-ribosyl)imidazole from N(2)-formyl-N(1)-(5-phospho-D-ribosyl)glycinamide: step 1/2. Functionally, phosphoribosylformylglycinamidine synthase involved in the purines biosynthetic pathway. Catalyzes the ATP-dependent conversion of formylglycinamide ribonucleotide (FGAR) and glutamine to yield formylglycinamidine ribonucleotide (FGAM) and glutamate. The sequence is that of Phosphoribosylformylglycinamidine synthase from Sodalis glossinidius (strain morsitans).